We begin with the raw amino-acid sequence, 521 residues long: uncharacterized protein (521 aa).

This is an uncharacterized protein from Magallana gigas (Pacific oyster).